The sequence spans 620 residues: MSFDIAKYPTLALVDSTQELRLLPKESLPKLCDELRRYLLDSVSRSSGHFASGLGTVELTVALHYVYNTPFDQLIWDVGHQAYPHKILTGRRDKIGTIRQKGGLHPFPWRGESEYDVLSVGHSSTSISAGIGIAVAAEKEGKDRHTVCVIGDGAITAGMAFEAMNHAGDIRPDMLVILNDNEMSISENVGALNNHLAQLLSGKLYSSLREGGKKVFSGVPPIKELLKRTEEHIKGMVVPGTLFEELGFNYIGPVDGHDVMGLISTLKNMRDLKGPQFLHIMTKKGRGYEPAEKDPITFHAVPKFDPSSGCLPKSSGGLPGYSKIFGDWLCETAAKDSKLMAITPAMREGSGMVEFSRKFPDRYFDVAIAEQHAVTFAAGLAIGGYKPVVAIYSTFLQRAYDQVIHDVAIQKLPVMFAIDRAGIVGADGQTHQGAFDLSYLRCIPDMVIMTPSDENECRQMLFTGYHYNDGPTAVRYPRGNAQGVALTPLEKLPIGKGLVKRHGEKLAILNFGTLMPEAAKVAEALNATLVDMRFVKPLDDTLILEMAAQHDALVTLEENAIMGGAGSGVNEVLMAHRKPVPVLNIGLPDLFIPQGTQEEARAELGLDAAGIEAKIKAWQA.

Thiamine diphosphate contacts are provided by residues H80 and 121–123; that span reads GHS. D152 contributes to the Mg(2+) binding site. Thiamine diphosphate is bound by residues 153–154, N181, Y288, and E370; that span reads GA. A Mg(2+)-binding site is contributed by N181.

The protein belongs to the transketolase family. DXPS subfamily. In terms of assembly, homodimer. Mg(2+) is required as a cofactor. The cofactor is thiamine diphosphate.

It catalyses the reaction D-glyceraldehyde 3-phosphate + pyruvate + H(+) = 1-deoxy-D-xylulose 5-phosphate + CO2. It participates in metabolic intermediate biosynthesis; 1-deoxy-D-xylulose 5-phosphate biosynthesis; 1-deoxy-D-xylulose 5-phosphate from D-glyceraldehyde 3-phosphate and pyruvate: step 1/1. In terms of biological role, catalyzes the acyloin condensation reaction between C atoms 2 and 3 of pyruvate and glyceraldehyde 3-phosphate to yield 1-deoxy-D-xylulose-5-phosphate (DXP). The protein is 1-deoxy-D-xylulose-5-phosphate synthase of Salmonella paratyphi A (strain ATCC 9150 / SARB42).